A 150-amino-acid chain; its full sequence is MEKRNPREWLCLNRTVRFGETDAAGVVHFVELFRWCHETWEESLEKFGIVLKEIFPSTQINTSQLDVALPVVHCEANYFQPLYVGDTINIELYPEKINESSFVLLFKFKKNGEQIGTTNIKHVSINPITREKCALSKQINLWLHESGLNF.

Residue Asp-22 is part of the active site.

It belongs to the 4-hydroxybenzoyl-CoA thioesterase family. DHNA-CoA hydrolase subfamily.

The catalysed reaction is 1,4-dihydroxy-2-naphthoyl-CoA + H2O = 1,4-dihydroxy-2-naphthoate + CoA + H(+). Its pathway is cofactor biosynthesis; phylloquinone biosynthesis. It functions in the pathway quinol/quinone metabolism; 1,4-dihydroxy-2-naphthoate biosynthesis; 1,4-dihydroxy-2-naphthoate from chorismate: step 7/7. Functionally, catalyzes the hydrolysis of 1,4-dihydroxy-2-naphthoyl-CoA (DHNA-CoA) to 1,4-dihydroxy-2-naphthoate (DHNA), a reaction involved in phylloquinone (vitamin K1) biosynthesis. In Prochlorococcus marinus (strain NATL1A), this protein is 1,4-dihydroxy-2-naphthoyl-CoA hydrolase.